A 343-amino-acid polypeptide reads, in one-letter code: Aspartate carbamoyltransferase catalytic subunit (343 aa).

2 residues coordinate carbamoyl phosphate: R91 and T92. K119 contributes to the L-aspartate binding site. Positions 141, 171, and 174 each coordinate carbamoyl phosphate. L-aspartate contacts are provided by R204 and R259. Residues G300 and P301 each contribute to the carbamoyl phosphate site.

The protein belongs to the aspartate/ornithine carbamoyltransferase superfamily. ATCase family. As to quaternary structure, heterododecamer (2C3:3R2) of six catalytic PyrB chains organized as two trimers (C3), and six regulatory PyrI chains organized as three dimers (R2).

It carries out the reaction carbamoyl phosphate + L-aspartate = N-carbamoyl-L-aspartate + phosphate + H(+). It participates in pyrimidine metabolism; UMP biosynthesis via de novo pathway; (S)-dihydroorotate from bicarbonate: step 2/3. Catalyzes the condensation of carbamoyl phosphate and aspartate to form carbamoyl aspartate and inorganic phosphate, the committed step in the de novo pyrimidine nucleotide biosynthesis pathway. In Burkholderia cenocepacia (strain HI2424), this protein is Aspartate carbamoyltransferase catalytic subunit.